The chain runs to 314 residues: tRNA dimethylallyltransferase (314 aa).

12-19 provides a ligand contact to ATP; that stretch reads GPTAGGKS. 14–19 contacts substrate; it reads TAGGKS. Residues 37 to 40 form an interaction with substrate tRNA region; that stretch reads DSMQ.

The protein belongs to the IPP transferase family. In terms of assembly, monomer. Mg(2+) is required as a cofactor.

The enzyme catalyses adenosine(37) in tRNA + dimethylallyl diphosphate = N(6)-dimethylallyladenosine(37) in tRNA + diphosphate. Catalyzes the transfer of a dimethylallyl group onto the adenine at position 37 in tRNAs that read codons beginning with uridine, leading to the formation of N6-(dimethylallyl)adenosine (i(6)A). In Rhodospirillum centenum (strain ATCC 51521 / SW), this protein is tRNA dimethylallyltransferase.